A 309-amino-acid chain; its full sequence is Homoserine O-succinyltransferase (309 aa).

Catalysis depends on Cys142, which acts as the Acyl-thioester intermediate. Substrate-binding residues include Lys163 and Ser192. The active-site Proton acceptor is His235. Glu237 is an active-site residue. Arg249 contributes to the substrate binding site.

This sequence belongs to the MetA family. In terms of assembly, homodimer.

The protein resides in the cytoplasm. The catalysed reaction is L-homoserine + succinyl-CoA = O-succinyl-L-homoserine + CoA. The protein operates within amino-acid biosynthesis; L-methionine biosynthesis via de novo pathway; O-succinyl-L-homoserine from L-homoserine: step 1/1. Functionally, transfers a succinyl group from succinyl-CoA to L-homoserine, forming succinyl-L-homoserine. The polypeptide is Homoserine O-succinyltransferase (Escherichia coli O127:H6 (strain E2348/69 / EPEC)).